Reading from the N-terminus, the 85-residue chain is Anti-neuroexcitation peptide 3 (85 aa).

Residues 1–21 form the signal peptide; that stretch reads MKLSLLLVISASMLIDGLVNA. The 61-residue stretch at 22-82 folds into the LCN-type CS-alpha/beta domain; that stretch reads DGYIRGSNGC…TWKSESNTCG (61 aa). 4 disulfides stabilise this stretch: Cys-31–Cys-81, Cys-35–Cys-56, Cys-42–Cys-63, and Cys-46–Cys-65.

This sequence belongs to the long (4 C-C) scorpion toxin superfamily. Sodium channel inhibitor family. Beta subfamily. As to expression, expressed by the venom gland.

The protein resides in the secreted. In terms of biological role, binds to sodium channels (Nav) and inhibits them. Recombinant ANEP delays the convulsion seizure of model animals by 18% and shows anti-neuroexcitatory activity. In Olivierus martensii (Manchurian scorpion), this protein is Anti-neuroexcitation peptide 3.